The following is a 218-amino-acid chain: Phosphatidylserine decarboxylase proenzyme (218 aa).

Ser-187 acts as the Schiff-base intermediate with substrate; via pyruvic acid in catalysis. Ser-187 is subject to Pyruvic acid (Ser); by autocatalysis.

It belongs to the phosphatidylserine decarboxylase family. PSD-A subfamily. As to quaternary structure, heterodimer of a large membrane-associated beta subunit and a small pyruvoyl-containing alpha subunit. Requires pyruvate as cofactor. In terms of processing, is synthesized initially as an inactive proenzyme. Formation of the active enzyme involves a self-maturation process in which the active site pyruvoyl group is generated from an internal serine residue via an autocatalytic post-translational modification. Two non-identical subunits are generated from the proenzyme in this reaction, and the pyruvate is formed at the N-terminus of the alpha chain, which is derived from the carboxyl end of the proenzyme. The post-translation cleavage follows an unusual pathway, termed non-hydrolytic serinolysis, in which the side chain hydroxyl group of the serine supplies its oxygen atom to form the C-terminus of the beta chain, while the remainder of the serine residue undergoes an oxidative deamination to produce ammonia and the pyruvoyl prosthetic group on the alpha chain.

It is found in the cell membrane. The enzyme catalyses a 1,2-diacyl-sn-glycero-3-phospho-L-serine + H(+) = a 1,2-diacyl-sn-glycero-3-phosphoethanolamine + CO2. It participates in phospholipid metabolism; phosphatidylethanolamine biosynthesis; phosphatidylethanolamine from CDP-diacylglycerol: step 2/2. Catalyzes the formation of phosphatidylethanolamine (PtdEtn) from phosphatidylserine (PtdSer). In Geobacter sulfurreducens (strain ATCC 51573 / DSM 12127 / PCA), this protein is Phosphatidylserine decarboxylase proenzyme.